Consider the following 314-residue polypeptide: Lipoyl synthase (314 aa).

[4Fe-4S] cluster contacts are provided by Cys-61, Cys-66, Cys-72, Cys-87, Cys-91, Cys-94, and Ser-301. A Radical SAM core domain is found at 73 to 290 (FGRGTATFMI…EEEAKKMGFS (218 aa)).

It belongs to the radical SAM superfamily. Lipoyl synthase family. [4Fe-4S] cluster is required as a cofactor.

It localises to the cytoplasm. It carries out the reaction [[Fe-S] cluster scaffold protein carrying a second [4Fe-4S](2+) cluster] + N(6)-octanoyl-L-lysyl-[protein] + 2 oxidized [2Fe-2S]-[ferredoxin] + 2 S-adenosyl-L-methionine + 4 H(+) = [[Fe-S] cluster scaffold protein] + N(6)-[(R)-dihydrolipoyl]-L-lysyl-[protein] + 4 Fe(3+) + 2 hydrogen sulfide + 2 5'-deoxyadenosine + 2 L-methionine + 2 reduced [2Fe-2S]-[ferredoxin]. It functions in the pathway protein modification; protein lipoylation via endogenous pathway; protein N(6)-(lipoyl)lysine from octanoyl-[acyl-carrier-protein]: step 2/2. Functionally, catalyzes the radical-mediated insertion of two sulfur atoms into the C-6 and C-8 positions of the octanoyl moiety bound to the lipoyl domains of lipoate-dependent enzymes, thereby converting the octanoylated domains into lipoylated derivatives. The sequence is that of Lipoyl synthase from Dechloromonas aromatica (strain RCB).